An 88-amino-acid chain; its full sequence is MAHKKGASSSRNGRDSNAKRLGVKRFGGQYVKAGEILVRQRGTRFHPGDNVGRGGDDTLFALVAGRVEFGNLRGRKAVSVIPTPVASE.

Positions 1 to 21 are disordered; sequence MAHKKGASSSRNGRDSNAKRL.

Belongs to the bacterial ribosomal protein bL27 family.

This Thermobifida fusca (strain YX) protein is Large ribosomal subunit protein bL27.